A 383-amino-acid polypeptide reads, in one-letter code: S-adenosylmethionine synthase (383 aa).

An ATP-binding site is contributed by histidine 15. Residue aspartate 17 coordinates Mg(2+). Glutamate 43 is a binding site for K(+). Residues glutamate 56 and glutamine 99 each coordinate L-methionine. The tract at residues 99–109 is flexible loop; sequence QSPDINQGVDR. ATP contacts are provided by residues 164–166, 230–231, aspartate 239, 245–246, alanine 262, and lysine 266; these read DAK, RF, and RK. Aspartate 239 contacts L-methionine. L-methionine is bound at residue lysine 270.

It belongs to the AdoMet synthase family. As to quaternary structure, homotetramer; dimer of dimers. Requires Mg(2+) as cofactor. It depends on K(+) as a cofactor.

The protein resides in the cytoplasm. It catalyses the reaction L-methionine + ATP + H2O = S-adenosyl-L-methionine + phosphate + diphosphate. Its pathway is amino-acid biosynthesis; S-adenosyl-L-methionine biosynthesis; S-adenosyl-L-methionine from L-methionine: step 1/1. In terms of biological role, catalyzes the formation of S-adenosylmethionine (AdoMet) from methionine and ATP. The overall synthetic reaction is composed of two sequential steps, AdoMet formation and the subsequent tripolyphosphate hydrolysis which occurs prior to release of AdoMet from the enzyme. The sequence is that of S-adenosylmethionine synthase from Shewanella denitrificans (strain OS217 / ATCC BAA-1090 / DSM 15013).